A 673-amino-acid chain; its full sequence is DNA ligase (673 aa).

Residues 33–37, 82–83, and glutamate 113 contribute to the NAD(+) site; these read DYEYD and SL. Residue lysine 115 is the N6-AMP-lysine intermediate of the active site. Positions 136, 170, 285, and 309 each coordinate NAD(+). Residues cysteine 403, cysteine 406, cysteine 421, and cysteine 426 each contribute to the Zn(2+) site. Residues 583-672 enclose the BRCT domain; that stretch reads AKSDILKGYT…SHEEVEKILM (90 aa).

The protein belongs to the NAD-dependent DNA ligase family. LigA subfamily. Requires Mg(2+) as cofactor. The cofactor is Mn(2+).

The enzyme catalyses NAD(+) + (deoxyribonucleotide)n-3'-hydroxyl + 5'-phospho-(deoxyribonucleotide)m = (deoxyribonucleotide)n+m + AMP + beta-nicotinamide D-nucleotide.. Its function is as follows. DNA ligase that catalyzes the formation of phosphodiester linkages between 5'-phosphoryl and 3'-hydroxyl groups in double-stranded DNA using NAD as a coenzyme and as the energy source for the reaction. It is essential for DNA replication and repair of damaged DNA. This Caldicellulosiruptor saccharolyticus (strain ATCC 43494 / DSM 8903 / Tp8T 6331) protein is DNA ligase.